Consider the following 432-residue polypeptide: Septin-11 (432 aa).

N-acetylalanine is present on Ala2. A Phosphoserine modification is found at Ser9. Positions 38 to 304 (QGFCFNILCV…ELYRRCKLEE (267 aa)) constitute a Septin-type G domain. A G1 motif region spans residues 48 to 55 (GETGIGKS). Residues 48–55 (GETGIGKS), Gly103, 184–192 (KADTIAKNE), Gly238, and Arg253 contribute to the GTP site. Residues 100 to 103 (DTVG) are G3 motif. Positions 183 to 186 (AKAD) are G4 motif. The stretch at 320–413 (QETYEAKRNE…LLQSQAQQSG (94 aa)) forms a coiled coil. Residues 403-416 (QLLQSQAQQSGAQQ) are compositionally biased toward low complexity. A disordered region spans residues 403-432 (QLLQSQAQQSGAQQTKKDKDKKNSPWLCTE).

The protein belongs to the TRAFAC class TrmE-Era-EngA-EngB-Septin-like GTPase superfamily. Septin GTPase family. Septins polymerize into heterooligomeric protein complexes that form filaments, and can associate with cellular membranes, actin filaments and microtubules. Forms homooligomers. GTPase activity is required for filament formation. Interacts with SEPTIN7, SEPTIN9 and SEPTIN12.

Its subcellular location is the cytoplasm. It localises to the cytoskeleton. The protein localises to the synapse. The protein resides in the cell projection. It is found in the dendritic spine. Its subcellular location is the axon. Its function is as follows. Filament-forming cytoskeletal GTPase. May play a role in cytokinesis (Potential). May play a role in the cytoarchitecture of neurons, including dendritic arborization and dendritic spines, and in GABAergic synaptic connectivity. In Macaca fascicularis (Crab-eating macaque), this protein is Septin-11.